Here is a 157-residue protein sequence, read N- to C-terminus: Phosphopantetheine adenylyltransferase (157 aa).

Threonine 8 lines the substrate pocket. Residues 8 to 9 (TF) and histidine 16 each bind ATP. Substrate is bound by residues lysine 40, threonine 72, and arginine 86. Residues 87–89 (GLR), glutamate 97, and 122–128 (YSFLSSS) each bind ATP.

It belongs to the bacterial CoaD family. As to quaternary structure, homohexamer. The cofactor is Mg(2+).

The protein localises to the cytoplasm. The enzyme catalyses (R)-4'-phosphopantetheine + ATP + H(+) = 3'-dephospho-CoA + diphosphate. It participates in cofactor biosynthesis; coenzyme A biosynthesis; CoA from (R)-pantothenate: step 4/5. Its function is as follows. Reversibly transfers an adenylyl group from ATP to 4'-phosphopantetheine, yielding dephospho-CoA (dPCoA) and pyrophosphate. The sequence is that of Phosphopantetheine adenylyltransferase from Prochlorococcus marinus (strain AS9601).